The sequence spans 339 residues: MTMNIGVIGCGLMGADHIRTLTTAVSGARVAAVNDADEGRAAGAAAEAEGARVHSDPFGLIDDAEVDAVVVASADETHEEFALACVRAGKPVLCEKPLATTSEACLRVVEAEMRGGRPLVQVGFMRRFDPSYLEMKRVLDSGRIGRALMLHSVHRNAGYPPALPDSALITGTGVHDIDIARWLLGQEIVTATAHTPRRSGLARPDFQDTRFLVLETENGVLVDVEIFVNAGYGYDVRGELVGELGSISLHPPATLTTRYEGLEGRPVARDFRPRFQDAYRNELQAWVTAGASGEVRGATAWDGYASAAVAEACLHSVATGSTAPVEIAPQPALYAPLAA.

It belongs to the Gfo/Idh/MocA family. As to quaternary structure, homotetramer.

It catalyses the reaction myo-inositol + NAD(+) = scyllo-inosose + NADH + H(+). Functionally, involved in the oxidation of myo-inositol (MI) to 2-keto-myo-inositol (2KMI or 2-inosose). The polypeptide is Inositol 2-dehydrogenase 2 (Saccharopolyspora erythraea (strain ATCC 11635 / DSM 40517 / JCM 4748 / NBRC 13426 / NCIMB 8594 / NRRL 2338)).